A 52-amino-acid chain; its full sequence is Rubredoxin (52 aa).

One can recognise a Rubredoxin-like domain in the interval 1 to 52; sequence MEKWQCTVCGYIYDPEVGDPTQNIPPGTKFEDLPDDWVCPDCGVGKDQFEKI. Cys6, Cys9, Cys39, and Cys42 together coordinate Fe cation.

The protein belongs to the rubredoxin family. The cofactor is Fe(3+).

Its function is as follows. Rubredoxin is a small nonheme, iron protein lacking acid-labile sulfide. Its single Fe, chelated to 4 Cys, functions as an electron acceptor and may also stabilize the conformation of the molecule. The polypeptide is Rubredoxin (Thermoanaerobacterium thermosaccharolyticum (strain ATCC 7956 / DSM 571 / NCIMB 9385 / NCA 3814 / NCTC 13789 / WDCM 00135 / 2032) (Clostridium thermosaccharolyticum)).